Reading from the N-terminus, the 296-residue chain is Probable xyloglucan endotransglucosylase/hydrolase 1 (296 aa).

The N-terminal stretch at M1–C22 is a signal peptide. The region spanning G23 to Y221 is the GH16 domain. The active-site Nucleophile is the E107. E111 serves as the catalytic Proton donor. A xyloglucan-binding site is contributed by E111. An N-linked (GlcNAc...) asparagine glycan is attached at N115. Xyloglucan is bound by residues Q124 to N126, N134 to E136, D200 to W201, and G205. 2 cysteine pairs are disulfide-bonded: C229/C240 and C277/C290. R282 contributes to the xyloglucan binding site.

Belongs to the glycosyl hydrolase 16 family. XTH group 1 subfamily. Post-translationally, contains at least one intrachain disulfide bond essential for its enzymatic activity.

It is found in the secreted. It localises to the cell wall. The protein resides in the extracellular space. The protein localises to the apoplast. The catalysed reaction is breaks a beta-(1-&gt;4) bond in the backbone of a xyloglucan and transfers the xyloglucanyl segment on to O-4 of the non-reducing terminal glucose residue of an acceptor, which can be a xyloglucan or an oligosaccharide of xyloglucan.. Its function is as follows. Catalyzes xyloglucan endohydrolysis (XEH) and/or endotransglycosylation (XET). Cleaves and religates xyloglucan polymers, an essential constituent of the primary cell wall, and thereby participates in cell wall construction of growing tissues. In Solanum lycopersicum (Tomato), this protein is Probable xyloglucan endotransglucosylase/hydrolase 1 (XTH1).